The chain runs to 207 residues: Protein GET1 (207 aa).

Residues 1–4 (MPSL) are Lumenal-facing. The helical transmembrane segment at 5 to 24 (LISVLFLHIAIYIINTIGAS) threads the bilayer. Over 25 to 110 (TIDSLLWLIY…LFDVAVKALR (86 aa)) the chain is Cytoplasmic. Residues 44 to 97 (MAREQHQMKLEVVQLKREMNATSSQDEFAKWAKLRRRHDKALEEYEVKNKQFSR) adopt a coiled-coil conformation. The helical transmembrane segment at 111-131 (WAGTSGLILLLQFWFSKTPIF) threads the bilayer. Residues 132 to 155 (TLPPSWIPWQVEWVLSFPRAPMGT) lie on the Lumenal side of the membrane. The chain crosses the membrane as a helical span at residues 156–172 (VSIQVWGGACAVMVALV). Topologically, residues 173–207 (GEAIGATVRYLYGSKDSMEAIKVGAGAVEKEKKRQ) are cytoplasmic.

The protein belongs to the WRB/GET1 family. Interacts with GET3.

The protein resides in the endoplasmic reticulum membrane. In terms of biological role, required for the post-translational delivery of tail-anchored (TA) proteins to the endoplasmic reticulum. Acts as a membrane receptor for soluble GET3, which recognizes and selectively binds the transmembrane domain of TA proteins in the cytosol. This chain is Protein GET1, found in Paracoccidioides lutzii (strain ATCC MYA-826 / Pb01) (Paracoccidioides brasiliensis).